A 530-amino-acid polypeptide reads, in one-letter code: UDP-glucuronosyltransferase 2B15 (530 aa).

Residues 1–23 (MSLKWTSVFLLIQLSCYFSSGSC) form the signal peptide. N-linked (GlcNAc...) asparagine glycosylation is present at asparagine 65. Lysine 136 is modified (N6-succinyllysine). Residues asparagine 316 and asparagine 483 are each glycosylated (N-linked (GlcNAc...) asparagine). The chain crosses the membrane as a helical span at residues 495-515 (IAFLLACVATVIFIITKFCLF).

Belongs to the UDP-glycosyltransferase family. In terms of tissue distribution, expressed in many tissues. Present in liver, prostate and testis.

The protein resides in the endoplasmic reticulum membrane. The catalysed reaction is glucuronate acceptor + UDP-alpha-D-glucuronate = acceptor beta-D-glucuronoside + UDP + H(+). It carries out the reaction 17alpha-estradiol + UDP-alpha-D-glucuronate = 17alpha-estradiol 3-O-(beta-D-glucuronate) + UDP + H(+). The enzyme catalyses 16alpha,17alpha-estriol + UDP-alpha-D-glucuronate = 16alpha,17alpha-estriol 3-O-(beta-D-glucuronate) + UDP + H(+). It catalyses the reaction 17beta-hydroxy-5alpha-androstan-3-one + UDP-alpha-D-glucuronate = 5alpha-dihydrotestosterone 17-O-(beta-D-glucuronate) + UDP + H(+). UDP-glucuronosyltransferase (UGT) that catalyzes phase II biotransformation reactions in which lipophilic substrates are conjugated with glucuronic acid to increase the metabolite's water solubility, thereby facilitating excretion into either the urine or bile. Essential for the elimination and detoxification of drugs, xenobiotics and endogenous compounds. Catalyzes the glucuronidation of endogenous steroid hormones such as androgens (testosterone, androsterone) and estrogens (estradiol, epiestradiol, estriol, catechol estrogens). Displays glucuronidation activity toward several classes of xenobiotic substrates, including phenolic compounds (eugenol, 4-nitrophenol, 4-hydroxybiphenyl) and phenylpropanoids (naringenin, coumarins). Catalyzes the glucuronidation of monoterpenoid alcohols such as borneol, menthol and isomenthol, a class of natural compounds used in essential oils. The sequence is that of UDP-glucuronosyltransferase 2B15 from Homo sapiens (Human).